A 154-amino-acid polypeptide reads, in one-letter code: UPF0178 protein Sala_2376 (154 aa).

The protein belongs to the UPF0178 family.

The chain is UPF0178 protein Sala_2376 from Sphingopyxis alaskensis (strain DSM 13593 / LMG 18877 / RB2256) (Sphingomonas alaskensis).